The sequence spans 211 residues: Large ribosomal subunit protein bL25 (211 aa).

Residues 188-211 form a disordered region; it reads APKAAKVSTDDEAAAPAEEAPAAE. Positions 201–211 are enriched in low complexity; it reads AAPAEEAPAAE.

It belongs to the bacterial ribosomal protein bL25 family. CTC subfamily. Part of the 50S ribosomal subunit; part of the 5S rRNA/L5/L18/L25 subcomplex. Contacts the 5S rRNA. Binds to the 5S rRNA independently of L5 and L18.

This is one of the proteins that binds to the 5S RNA in the ribosome where it forms part of the central protuberance. The chain is Large ribosomal subunit protein bL25 from Colwellia psychrerythraea (strain 34H / ATCC BAA-681) (Vibrio psychroerythus).